A 210-amino-acid chain; its full sequence is 7-methyl-GTP pyrophosphatase (210 aa).

D79 acts as the Proton acceptor in catalysis.

Belongs to the Maf family. YceF subfamily. A divalent metal cation is required as a cofactor.

Its subcellular location is the cytoplasm. It catalyses the reaction N(7)-methyl-GTP + H2O = N(7)-methyl-GMP + diphosphate + H(+). Nucleoside triphosphate pyrophosphatase that hydrolyzes 7-methyl-GTP (m(7)GTP). May have a dual role in cell division arrest and in preventing the incorporation of modified nucleotides into cellular nucleic acids. This Burkholderia lata (strain ATCC 17760 / DSM 23089 / LMG 22485 / NCIMB 9086 / R18194 / 383) protein is 7-methyl-GTP pyrophosphatase.